A 343-amino-acid chain; its full sequence is Cytoplasmic tRNA 2-thiolation protein 1 (343 aa).

This sequence belongs to the TtcA family. CTU1/NCS6/ATPBD3 subfamily.

Its subcellular location is the cytoplasm. It functions in the pathway tRNA modification; 5-methoxycarbonylmethyl-2-thiouridine-tRNA biosynthesis. Its function is as follows. Plays a central role in 2-thiolation of mcm(5)S(2)U at tRNA wobble positions of tRNA(Lys), tRNA(Glu) and tRNA(Gln). Directly binds tRNAs and probably acts by catalyzing adenylation of tRNAs, an intermediate required for 2-thiolation. It is unclear whether it acts as a sulfurtransferase that transfers sulfur from thiocarboxylated URM1 onto the uridine of tRNAs at wobble position. This Drosophila pseudoobscura pseudoobscura (Fruit fly) protein is Cytoplasmic tRNA 2-thiolation protein 1.